The following is a 562-amino-acid chain: Pyruvate kinase isozyme G, chloroplastic (562 aa).

R121 is a binding site for substrate. 4 residues coordinate K(+): N123, S125, D156, and T157. 123 to 126 lines the ATP pocket; sequence NMSH. E308 provides a ligand contact to Mg(2+). Substrate is bound by residues G331, D332, and T364. Position 332 (D332) interacts with Mg(2+).

It belongs to the pyruvate kinase family. As to quaternary structure, homotetramer. Mg(2+) is required as a cofactor. K(+) serves as cofactor. As to expression, highest levels in leaves. Also found in stems, roots and flowers.

The protein resides in the plastid. Its subcellular location is the chloroplast. The enzyme catalyses pyruvate + ATP = phosphoenolpyruvate + ADP + H(+). The protein operates within carbohydrate degradation; glycolysis; pyruvate from D-glyceraldehyde 3-phosphate: step 5/5. This Nicotiana tabacum (Common tobacco) protein is Pyruvate kinase isozyme G, chloroplastic.